We begin with the raw amino-acid sequence, 525 residues long: Serine/threonine protein phosphatase 2A 55 kDa regulatory subunit B beta isoform (525 aa).

The interval 1 to 30 is disordered; that stretch reads MDPSSKSPDDDDLRPEAEAARRPQPQPQPR. WD repeat units follow at residues 48–87 and 124–165; these read QEVD…DSAS and EIEE…VKRI. Positions 169–191 are disordered; it reads NLNTSQSSGNGTTSSSSSSSSRA. A compositionally biased stretch (low complexity) spans 171–189; the sequence is NTSQSSGNGTTSSSSSSSS. WD repeat units follow at residues 244–282, 293–333, 352–390, and 495–525; these read AHDY…QSFN, DLTE…LCDN, EIIA…GPVA, and DLST…MYYA.

It belongs to the phosphatase 2A regulatory subunit B family. As to quaternary structure, PP2A consists of a common heteromeric enzyme, composed of a catalytic subunit (subunits C), a constant regulatory subunit (subunit A), and a variety of regulatory subunits such as subunits B (the R2/B/PR55/B55, R3/B''/PR72/PR130/PR59 and R5/B'/B56 families).

The B regulatory subunit may modulate substrate selectivity and catalytic activity, and may also direct the localization of the catalytic enzyme to a particular subcellular compartment. In Oryza sativa subsp. japonica (Rice), this protein is Serine/threonine protein phosphatase 2A 55 kDa regulatory subunit B beta isoform.